Here is a 305-residue protein sequence, read N- to C-terminus: NAD kinase 2 (305 aa).

Asp-78 (proton acceptor) is an active-site residue. NAD(+) is bound by residues 78–79 (DG), 152–153 (NE), Asp-182, 193–198 (TAYSLS), and Asn-251.

It belongs to the NAD kinase family. A divalent metal cation serves as cofactor.

The protein localises to the cytoplasm. It catalyses the reaction NAD(+) + ATP = ADP + NADP(+) + H(+). In terms of biological role, involved in the regulation of the intracellular balance of NAD and NADP, and is a key enzyme in the biosynthesis of NADP. Catalyzes specifically the phosphorylation on 2'-hydroxyl of the adenosine moiety of NAD to yield NADP. Functions as a growth repressor under light-activated heterotrophic growth conditions and light and dark cycle conditions in the presence of glucose. NADP(H)/NAD(H) maintenance by slr0400 probably plays a significant role in modulating glycolysis and the TCA cycle to repress the growth rate and maintain the photosynthetic capacity. The sequence is that of NAD kinase 2 from Synechocystis sp. (strain ATCC 27184 / PCC 6803 / Kazusa).